The chain runs to 262 residues: Cutinase 2 (262 aa).

Position 61 (Y61) interacts with poly(ethylene terephthalate). The active-site Nucleophile is S131. Poly(ethylene terephthalate) contacts are provided by M132 and W156. Residues D177 and H209 each act as charge relay system in the active site. C242 and C260 are disulfide-bonded.

The protein belongs to the AB hydrolase superfamily.

It is found in the secreted. It localises to the periplasm. The catalysed reaction is a butanoate ester + H2O = an aliphatic alcohol + butanoate + H(+). It catalyses the reaction an acetyl ester + H2O = an aliphatic alcohol + acetate + H(+). The enzyme catalyses (ethylene terephthalate)(n) + H2O = (ethylene terephthalate)(n-1) + 4-[(2-hydroxyethoxy)carbonyl]benzoate + H(+). It carries out the reaction cutin + H2O = cutin monomers.. In terms of biological role, catalyzes the hydrolysis of cutin, a polyester that forms the structure of plant cuticle. Shows esterase activity towards p-nitrophenol-linked aliphatic esters (pNP-aliphatic esters). Capable of degrading the plastic poly(ethylene terephthalate) (PET), the most abundant polyester plastic in the world. Capable of degrading the bioplastic poly(lactic acid) (PLLA). This Thermobifida cellulosilytica protein is Cutinase 2.